The primary structure comprises 428 residues: Tryptophan synthase beta chain (428 aa).

At lysine 100 the chain carries N6-(pyridoxal phosphate)lysine.

This sequence belongs to the TrpB family. As to quaternary structure, tetramer of two alpha and two beta chains. Requires pyridoxal 5'-phosphate as cofactor.

It catalyses the reaction (1S,2R)-1-C-(indol-3-yl)glycerol 3-phosphate + L-serine = D-glyceraldehyde 3-phosphate + L-tryptophan + H2O. The protein operates within amino-acid biosynthesis; L-tryptophan biosynthesis; L-tryptophan from chorismate: step 5/5. In terms of biological role, the beta subunit is responsible for the synthesis of L-tryptophan from indole and L-serine. The sequence is that of Tryptophan synthase beta chain from Streptomyces griseus subsp. griseus (strain JCM 4626 / CBS 651.72 / NBRC 13350 / KCC S-0626 / ISP 5235).